A 168-amino-acid chain; its full sequence is Endoribonuclease YbeY (168 aa).

Zn(2+) is bound by residues histidine 132, histidine 136, and histidine 142.

This sequence belongs to the endoribonuclease YbeY family. The cofactor is Zn(2+).

It localises to the cytoplasm. Its function is as follows. Single strand-specific metallo-endoribonuclease involved in late-stage 70S ribosome quality control and in maturation of the 3' terminus of the 16S rRNA. In Clostridium perfringens (strain SM101 / Type A), this protein is Endoribonuclease YbeY.